The primary structure comprises 433 residues: MDKFVIRGGTPLLGNVRVSGAKNAALPAMAAALLTEEPVILENIPQVRDIITERNLLQAMGAEVELGYGRAHHRTTLCCRNLVNPEASYELVKTMRASTLVLGPLVARTGEARVSLPGGCAIGARPIDLHIKGLEKLGAEITQEHGYIKAKATRLKGNHIVFEKITVTGTEDLLMAATLADGETVMENCAREPEVTDLAHLLVKMGAKIEGIGTSTLKITGVEKLHGAKHRIIPDRIEAGTFIIAGALTGGDLMVQNCDPSHLGALLAKLEENGVKIRSNGDSVRVMSEGTLKPGDASTEEYPGFPTDMQAQYMALATQCEGASVVVENIFENRFMHAQELVRMGANIKIEGRRAIVRGKTPLSGAAVLASDLRASASLVLAALVAEGETIIDRVYHIDRGYEHIEEKLRGLGAEIKRIGELFPKKASPVAVS.

22–23 (KN) contacts phosphoenolpyruvate. Residue Arg-96 coordinates UDP-N-acetyl-alpha-D-glucosamine. The Proton donor role is filled by Cys-120. Position 120 is a 2-(S-cysteinyl)pyruvic acid O-phosphothioketal (Cys-120). UDP-N-acetyl-alpha-D-glucosamine contacts are provided by residues 125–129 (RPIDL), Asp-308, and Ile-330.

This sequence belongs to the EPSP synthase family. MurA subfamily.

Its subcellular location is the cytoplasm. It catalyses the reaction phosphoenolpyruvate + UDP-N-acetyl-alpha-D-glucosamine = UDP-N-acetyl-3-O-(1-carboxyvinyl)-alpha-D-glucosamine + phosphate. It participates in cell wall biogenesis; peptidoglycan biosynthesis. Cell wall formation. Adds enolpyruvyl to UDP-N-acetylglucosamine. In Koribacter versatilis (strain Ellin345), this protein is UDP-N-acetylglucosamine 1-carboxyvinyltransferase.